A 93-amino-acid chain; its full sequence is Beta-defensin 128 (93 aa).

An N-terminal signal peptide occupies residues 1–18 (MKLFLVLIILLFEVLTDG). 3 disulfides stabilise this stretch: cysteine 24–cysteine 52, cysteine 32–cysteine 46, and cysteine 36–cysteine 53.

Belongs to the beta-defensin family.

It localises to the secreted. Functionally, has antibacterial activity. This is Beta-defensin 128 (DEFB128) from Macaca fascicularis (Crab-eating macaque).